The sequence spans 274 residues: NH(3)-dependent NAD(+) synthetase (274 aa).

Position 46-53 (46-53) interacts with ATP; sequence GISGGQDS. Aspartate 52 contributes to the Mg(2+) binding site. Arginine 140 provides a ligand contact to deamido-NAD(+). ATP is bound at residue threonine 160. Glutamate 165 serves as a coordination point for Mg(2+). 2 residues coordinate deamido-NAD(+): lysine 173 and aspartate 180. Residues lysine 189 and threonine 211 each coordinate ATP. 260–261 provides a ligand contact to deamido-NAD(+); it reads HK.

This sequence belongs to the NAD synthetase family. As to quaternary structure, homodimer.

The catalysed reaction is deamido-NAD(+) + NH4(+) + ATP = AMP + diphosphate + NAD(+) + H(+). It functions in the pathway cofactor biosynthesis; NAD(+) biosynthesis; NAD(+) from deamido-NAD(+) (ammonia route): step 1/1. Its function is as follows. Catalyzes the ATP-dependent amidation of deamido-NAD to form NAD. Uses ammonia as a nitrogen source. The protein is NH(3)-dependent NAD(+) synthetase of Streptococcus pneumoniae (strain Hungary19A-6).